A 196-amino-acid chain; its full sequence is Holliday junction resolvase RecU (196 aa).

4 residues coordinate Mg(2+): T82, D84, E97, and Q116.

This sequence belongs to the RecU family. Mg(2+) is required as a cofactor.

Its subcellular location is the cytoplasm. It carries out the reaction Endonucleolytic cleavage at a junction such as a reciprocal single-stranded crossover between two homologous DNA duplexes (Holliday junction).. Its function is as follows. Endonuclease that resolves Holliday junction intermediates in genetic recombination. Cleaves mobile four-strand junctions by introducing symmetrical nicks in paired strands. Promotes annealing of linear ssDNA with homologous dsDNA. Required for DNA repair, homologous recombination and chromosome segregation. The polypeptide is Holliday junction resolvase RecU (Oceanobacillus iheyensis (strain DSM 14371 / CIP 107618 / JCM 11309 / KCTC 3954 / HTE831)).